A 432-amino-acid polypeptide reads, in one-letter code: Zinc finger protein 829 (432 aa).

One can recognise a KRAB domain in the interval valine 35–serine 106. Residues tryptophan 156–histidine 178 form a C2H2-type 1 zinc finger. The C2H2-type 2; degenerate zinc-finger motif lies at tyrosine 184–histidine 206. C2H2-type zinc fingers lie at residues tyrosine 212–histidine 234, tyrosine 240–histidine 262, tyrosine 268–histidine 290, tyrosine 296–histidine 318, tyrosine 324–histidine 346, tyrosine 352–histidine 374, tyrosine 380–histidine 402, and tyrosine 408–histidine 430.

Belongs to the krueppel C2H2-type zinc-finger protein family.

Its subcellular location is the nucleus. Its function is as follows. May be involved in transcriptional regulation. The chain is Zinc finger protein 829 (ZNF829) from Homo sapiens (Human).